The sequence spans 143 residues: Sirohydrochlorin cobaltochelatase (143 aa).

His9 serves as the catalytic Proton acceptor. His9 contacts Co(2+). Ni(2+) is bound at residue His9. Substrate contacts are provided by residues Glu45 and 70–75; that span reads LAHGNH. His75 contributes to the Co(2+) binding site. A Ni(2+)-binding site is contributed by His75.

It belongs to the CbiX family. CbiXS subfamily. In terms of assembly, homotetramer; dimer of dimers.

The catalysed reaction is Co-sirohydrochlorin + 2 H(+) = sirohydrochlorin + Co(2+). The enzyme catalyses Ni-sirohydrochlorin + 2 H(+) = sirohydrochlorin + Ni(2+). It participates in cofactor biosynthesis; adenosylcobalamin biosynthesis; cob(II)yrinate a,c-diamide from sirohydrochlorin (anaerobic route): step 1/10. In terms of biological role, catalyzes the insertion of Co(2+) into sirohydrochlorin as part of the anaerobic pathway to cobalamin biosynthesis. Involved in the biosynthesis of the unique nickel-containing tetrapyrrole coenzyme F430, the prosthetic group of methyl-coenzyme M reductase (MCR), which plays a key role in methanogenesis and anaerobic methane oxidation. Catalyzes the insertion of Ni(2+) into sirohydrochlorin to yield Ni-sirohydrochlorin. The protein is Sirohydrochlorin cobaltochelatase of Methanococcus aeolicus (strain ATCC BAA-1280 / DSM 17508 / OCM 812 / Nankai-3).